A 566-amino-acid chain; its full sequence is Malate synthase, glyoxysomal (566 aa).

Arg179 serves as the catalytic Proton acceptor. Catalysis depends on Asp465, which acts as the Proton donor. A Microbody targeting signal motif is present at residues 564–566 (SRL).

It belongs to the malate synthase family.

The protein resides in the glyoxysome. It catalyses the reaction glyoxylate + acetyl-CoA + H2O = (S)-malate + CoA + H(+). Its pathway is carbohydrate metabolism; glyoxylate cycle; (S)-malate from isocitrate: step 2/2. This is Malate synthase, glyoxysomal (MLS) from Raphanus sativus (Radish).